A 502-amino-acid chain; its full sequence is Membrane-bound lytic murein transglycosylase F (502 aa).

The first 33 residues, 1 to 33 (MSRFISTFRSSSAQLSIVLAVILATGCSQPTTL), serve as a signal peptide directing secretion. A non-LT domain region spans residues 34-264 (QEIREEGVLH…QLAERFYGHL (231 aa)). An LT domain region spans residues 265 to 502 (DRLNYVGART…PELRLIPPTL (238 aa)). Glu311 is a catalytic residue. A disordered region spans residues 457-502 (PSASGLEDQLAWLGDNEAGPEAPAKESQPDLRADLPPELRLIPPTL). A compositionally biased stretch (basic and acidic residues) spans 479–493 (PAKESQPDLRADLPP).

In the N-terminal section; belongs to the bacterial solute-binding protein 3 family. It in the C-terminal section; belongs to the transglycosylase Slt family.

The protein resides in the cell outer membrane. The catalysed reaction is Exolytic cleavage of the (1-&gt;4)-beta-glycosidic linkage between N-acetylmuramic acid (MurNAc) and N-acetylglucosamine (GlcNAc) residues in peptidoglycan, from either the reducing or the non-reducing ends of the peptidoglycan chains, with concomitant formation of a 1,6-anhydrobond in the MurNAc residue.. Functionally, murein-degrading enzyme that degrades murein glycan strands and insoluble, high-molecular weight murein sacculi, with the concomitant formation of a 1,6-anhydromuramoyl product. Lytic transglycosylases (LTs) play an integral role in the metabolism of the peptidoglycan (PG) sacculus. Their lytic action creates space within the PG sacculus to allow for its expansion as well as for the insertion of various structures such as secretion systems and flagella. The polypeptide is Membrane-bound lytic murein transglycosylase F (Marinobacter nauticus (strain ATCC 700491 / DSM 11845 / VT8) (Marinobacter aquaeolei)).